The sequence spans 636 residues: Cysteine-rich receptor-like protein kinase 24 (636 aa).

An N-terminal signal peptide occupies residues 1 to 20 (MVKFLVIFWFVVISFSHVSA). 2 consecutive Gnk2-homologous domains span residues 21-124 (QVCL…NRSF) and 130-235 (MEIL…LYPF). At 21-254 (QVCLERSGFF…RQKDGKSIST (234 aa)) the chain is on the extracellular side. N-linked (GlcNAc...) asparagine glycans are attached at residues asparagine 33, asparagine 50, asparagine 98, asparagine 101, asparagine 121, asparagine 137, asparagine 145, and asparagine 197. The chain crosses the membrane as a helical span at residues 255–275 (GAIVAIIVVPILLLALGVGLW). Over 276–636 (KRRKAYKTKT…SVSVTCVSPR (361 aa)) the chain is Cytoplasmic. Residues 312-585 (FHNVNKLGHG…TMSTVFHMLT (274 aa)) enclose the Protein kinase domain. Residues 318–326 (LGHGGFGEV) and lysine 340 contribute to the ATP site. The Proton acceptor role is filled by aspartate 437.

The protein belongs to the protein kinase superfamily. Ser/Thr protein kinase family. CRK subfamily.

It is found in the membrane. The enzyme catalyses L-seryl-[protein] + ATP = O-phospho-L-seryl-[protein] + ADP + H(+). The catalysed reaction is L-threonyl-[protein] + ATP = O-phospho-L-threonyl-[protein] + ADP + H(+). The polypeptide is Cysteine-rich receptor-like protein kinase 24 (CRK24) (Arabidopsis thaliana (Mouse-ear cress)).